The sequence spans 648 residues: Replication restart protein PriA (648 aa).

The 167-residue stretch at 131–297 folds into the Helicase ATP-binding domain; sequence TILNESNKPT…KTHKYQLVTL (167 aa). 144–151 serves as a coordination point for ATP; that stretch reads GVTGSGKT. The short motif at 240–243 is the DEAH box element; the sequence is DEEH. Zn(2+)-binding residues include C358, C361, C367, C370, C385, C388, C398, and C401. Residues 375 to 548 form the Helicase C-terminal domain; the sequence is VLHKATKKLE…RFFTNELEIR (174 aa).

This sequence belongs to the helicase family. PriA subfamily. As to quaternary structure, component of the replication restart primosome. Zn(2+) serves as cofactor.

It carries out the reaction Couples ATP hydrolysis with the unwinding of duplex DNA by translocating in the 3'-5' direction.. It catalyses the reaction ATP + H2O = ADP + phosphate + H(+). Initiates the restart of stalled replication forks, which reloads the replicative helicase on sites other than the origin of replication. Recognizes and binds to abandoned replication forks and remodels them to uncover a helicase loading site. Promotes assembly of the primosome at these replication forks. The polypeptide is Replication restart protein PriA (Rickettsia prowazekii (strain Madrid E)).